Here is a 397-residue protein sequence, read N- to C-terminus: Formate-dependent phosphoribosylglycinamide formyltransferase (397 aa).

N(1)-(5-phospho-beta-D-ribosyl)glycinamide-binding positions include E22–L23 and E82. ATP-binding positions include R114, K155, S160–Q165, E195–V198, and E203. The 194-residue stretch at C119–L312 folds into the ATP-grasp domain. 2 residues coordinate Mg(2+): E271 and E283. Residues D290, K360, and R367–R368 each bind N(1)-(5-phospho-beta-D-ribosyl)glycinamide.

This sequence belongs to the PurK/PurT family. Homodimer.

It carries out the reaction N(1)-(5-phospho-beta-D-ribosyl)glycinamide + formate + ATP = N(2)-formyl-N(1)-(5-phospho-beta-D-ribosyl)glycinamide + ADP + phosphate + H(+). Its pathway is purine metabolism; IMP biosynthesis via de novo pathway; N(2)-formyl-N(1)-(5-phospho-D-ribosyl)glycinamide from N(1)-(5-phospho-D-ribosyl)glycinamide (formate route): step 1/1. In terms of biological role, involved in the de novo purine biosynthesis. Catalyzes the transfer of formate to 5-phospho-ribosyl-glycinamide (GAR), producing 5-phospho-ribosyl-N-formylglycinamide (FGAR). Formate is provided by PurU via hydrolysis of 10-formyl-tetrahydrofolate. This chain is Formate-dependent phosphoribosylglycinamide formyltransferase, found in Alcanivorax borkumensis (strain ATCC 700651 / DSM 11573 / NCIMB 13689 / SK2).